We begin with the raw amino-acid sequence, 187 residues long: Lipid A acyltransferase PagP (187 aa).

The first 26 residues, 1-26 (MIVAKKYFLVLSFLFVQFALLPQAFS), serve as a signal peptide directing secretion. Active-site residues include His59, Asp102, and Ser103.

This sequence belongs to the lipid A palmitoyltransferase family. As to quaternary structure, homodimer.

The protein resides in the cell outer membrane. It carries out the reaction a lipid A + a 1,2-diacyl-sn-glycero-3-phosphocholine = a hepta-acyl lipid A + a 2-acyl-sn-glycero-3-phosphocholine. The catalysed reaction is a lipid IVA + a 1,2-diacyl-sn-glycero-3-phosphocholine = a lipid IVB + a 2-acyl-sn-glycero-3-phosphocholine. The enzyme catalyses a lipid IIA + a 1,2-diacyl-sn-glycero-3-phosphocholine = a lipid IIB + a 2-acyl-sn-glycero-3-phosphocholine. Its function is as follows. Transfers a fatty acid residue from the sn-1 position of a phospholipid to the N-linked hydroxyfatty acid chain on the proximal unit of lipid A or its precursors. This chain is Lipid A acyltransferase PagP, found in Citrobacter koseri (strain ATCC BAA-895 / CDC 4225-83 / SGSC4696).